Here is a 522-residue protein sequence, read N- to C-terminus: ARS-binding protein 1 (522 aa).

Residues 70–144 (DVKRNRPPKY…RKRHILHAIN (75 aa)) enclose the HTH CENPB-type domain. T460 is modified (phosphothreonine).

In terms of assembly, interacts with mcm10.

It localises to the nucleus. Its function is as follows. Binds, preferentially, to the Maundrell ARS consensus sequence within ARS3002. The sequence is that of ARS-binding protein 1 (abp1) from Schizosaccharomyces pombe (strain 972 / ATCC 24843) (Fission yeast).